We begin with the raw amino-acid sequence, 1014 residues long: Collagen alpha-1(I) chain (1014 aa).

A disordered region spans residues 1–1014 (SYGYDEKGGI…PGPPGPPGPP (1014 aa)). Over residues 9 to 22 (GISVPGPMGPSGPR) the composition is skewed to low complexity. P25, P28, P30, P39, P42, P45, P60, P75, P81, P90, and P96 each carry 4-hydroxyproline. Positions 33-51 (QGFQGPPGEPGEPGSSGPM) are enriched in low complexity. Basic and acidic residues predominate over residues 63–77 (NGDDGEAGKPGRPGE). K99 carries the post-translational modification 5-hydroxylysine; alternate. An O-linked (Gal...) hydroxylysine; alternate glycan is attached at K99. S105 bears the Phosphoserine mark. The span at 113-129 (DAGPAGPKGEPGSPGEN) shows a compositional bias: low complexity. A 4-hydroxyproline mark is found at P123, P126, P132, P141, P147, P168, P177, P180, P207, P210, P222, P228, P237, P243, P246, and P261. The span at 147-165 (PGASGPAGARGNDGATGAA) shows a compositional bias: low complexity. Positions 167–179 (PPGPTGPAGPPGF) are enriched in pro residues. Positions 213–252 (AGAAGPAGNPGADGQPGAKGANGAPGIAGAPGFPGARGPS) are enriched in low complexity. Position 264 is a 5-hydroxylysine (K264). 4-hydroxyproline occurs at positions 270, 273, 285, 294, 309, 315, 324, and 330. The segment covering 319–328 (GERGGPGSRG) has biased composition (gly residues). 5-hydroxylysine is present on K339. A 4-hydroxyproline mark is found at P348, P357, P363, P369, P378, P381, P390, P399, P405, P417, P426, P435, P438, P456, P473, P479, P485, P491, P497, P503, P515, P524, P535, P548, P554, and P563. The segment covering 372 to 398 (KGLTGSPGSPGPDGKTGPPGPAGQDGR) has biased composition (low complexity). Residues 407–426 (ARGQAGVMGFPGPKGAAGEP) are compositionally biased toward low complexity. Low complexity predominate over residues 485–494 (PGEAGKPGEQ). Residue K575 is modified to 5-hydroxylysine. P581, P596, and P602 each carry 4-hydroxyproline. The span at 608-622 (SGPSGPAGPTGARGA) shows a compositional bias: low complexity. Residue S611 is modified to Phosphoserine. A 4-hydroxyproline mark is found at P623, P629, P632, P641, P647, P674, and P683. Low complexity predominate over residues 635–665 (AGFAGPPGADGQPGAKGEPGDAGAKGDAGPS). K686 carries the post-translational modification 5-hydroxylysine. Positions 691-707 (SAGPPGATGFPGAAGRV) are enriched in low complexity. 4-hydroxyproline is present on residues P695 and P701. P709 carries the post-translational modification 3-hydroxyproline. P710, P719, P722, P743, P752, P760, P769, P787, P796, P799, P805, P820, P826, P832, P841, and P847 each carry 4-hydroxyproline. The span at 736–745 (ETGPAGRPGE) shows a compositional bias: low complexity. Over residues 757–769 (KGSPGADGPAGAP) the composition is skewed to low complexity. A compositionally biased stretch (pro residues) spans 819–829 (PPGPVGPPGLA). K856 is subject to 5-hydroxylysine. Over residues 864–879 (PGPPGAPGAPGAPGPV) the composition is skewed to pro residues. 4-hydroxyproline is present on residues P867, P870, and P873. The segment covering 900 to 914 (AGPAGARGPAGPQGP) has biased composition (low complexity). Basic and acidic residues predominate over residues 915 to 929 (RGDKGETGEQGDRGI). Residue K918 is modified to 5-hydroxylysine. 5-hydroxylysine; alternate is present on K930. K930 is a glycosylation site (O-linked (Gal...) hydroxylysine; alternate). 4-hydroxyproline is present on residues P945, P948, P966, and P981. Residues 948-981 (PGEQGPSGASGPAGPRGPPGSAGSPGKDGLNGLP) show a composition bias toward low complexity. Position 986 is a 3-hydroxyproline (P986). P987 is subject to 4-hydroxyproline. Over residues 999–1014 (VGPPGPPGPPGPPGPP) the composition is skewed to pro residues. The residue at position 1001 (P1001) is a 3-hydroxyproline. At P1002 the chain carries 4-hydroxyproline. P1004 carries the 3-hydroxyproline modification. A 4-hydroxyproline modification is found at P1005. P1007 is modified (3-hydroxyproline). A 4-hydroxyproline mark is found at P1008, P1011, and P1014.

The protein belongs to the fibrillar collagen family. Trimers of one alpha 2(I) and two alpha 1(I) chains. In terms of processing, contains mostly 4-hydroxyproline. Proline residues at the third position of the tripeptide repeating unit (G-X-Y) are hydroxylated in some or all of the chains. Contains 3-hydroxyproline at a few sites. This modification occurs on the first proline residue in the sequence motif Gly-Pro-Hyp, where Hyp is 4-hydroxyproline. Post-translationally, lysine residues at the third position of the tripeptide repeating unit (G-X-Y) are 5-hydroxylated in some or all of the chains. In terms of processing, O-glycosylated on hydroxylated lysine residues. The O-linked glycan consists of a Glc-Gal disaccharide. Expressed in bones.

The protein resides in the secreted. It is found in the extracellular space. The protein localises to the extracellular matrix. In terms of biological role, type I collagen is a member of group I collagen (fibrillar forming collagen). This Megatherium americanum (Giant ground sloth) protein is Collagen alpha-1(I) chain.